Here is a 50-residue protein sequence, read N- to C-terminus: uncharacterized protein (50 aa).

Residues 5–19 traverse the membrane as a helical segment; it reads IIIIVIVIIIFFFYL. Residues 19–50 adopt a coiled-coil conformation; it reads LKQKKLTNCETQVVKVQKDIDEINLKLKKLNK.

The protein localises to the membrane. This is an uncharacterized protein from Acheta domesticus (House cricket).